We begin with the raw amino-acid sequence, 62 residues long: Teretoxin Tan1.1 (62 aa).

The signal sequence occupies residues Met-1 to Phe-21. Positions Pro-22–Arg-38 are excised as a propeptide.

Belongs to the teretoxin A (TA) superfamily. Contains 2 disulfide bonds. As to expression, expressed by the venom duct.

The protein localises to the secreted. This Terebra anilis (Auger snail) protein is Teretoxin Tan1.1.